We begin with the raw amino-acid sequence, 338 residues long: CRISPR system Cmr subunit Cmr1-1 (338 aa).

This sequence belongs to the CRISPR system Cmr1 family. In terms of assembly, part of the type III-B Cmr ribonucleoprotein (RNP) complex, an elongated RNP with Cmr2 and Cmr3 as the base, with Cmr4 and Cmr5 forming a helical core along the mature crRNA (39 or 45 nt in length), while the complex is capped by Cmr6 and Cmr1. The 5' end of the crRNA is bound to Cmr2 and Cmr3, while Cmr6 and a Cmr1 subunit (Cmr1-1 or Cmr1-2) cap the 3' end of the crRNA. The target RNA lies antiparallel to the crRNA, with its 5' end near Cmr1 and Cmr6 and its 3' end near Cmr2 and Cmr3; major target cleavage occurs nears the junction of Cmr1/Cmr6 and Cmr4/Cmr, with minor cleavage occurring at 6 nt intervals which coincide with the proposed spacing of Cmr4 subunits.

It is found in the cytoplasm. CRISPR (clustered regularly interspaced short palindromic repeat), is an adaptive immune system that provides protection against mobile genetic elements (viruses, transposable elements and conjugative plasmids). CRISPR clusters contain sequences complementary to antecedent mobile elements and target invading nucleic acids. CRISPR clusters are transcribed and processed into CRISPR RNA (crRNA), formerly called psiRNA (prokaryotic silencing) in this organism. Part of the Cmr ribonucleoprotein complex which has divalent cation-dependent endoribonuclease activity specific for ssRNA complementary to the crRNA (target RNA), generating 5' hydroxy- and 3' phosphate or 2'-3' cyclic phosphate termini. Cmr4 is probably the subunit that cleaves target RNA. Cmr complex does not cleave ssDNA complementary to the crRNA. Cleavage of invading RNA is guided by the crRNA; substrate cleavage occurs a fixed distance (14 nt) from the 3' end of the crRNA. In vitro reconstitution shows Cmr1-2 and Cmr5 are not absolutely necessary for target cleavage. The sequence is that of CRISPR system Cmr subunit Cmr1-1 from Pyrococcus furiosus (strain ATCC 43587 / DSM 3638 / JCM 8422 / Vc1).